The chain runs to 554 residues: CTP synthase (554 aa).

The segment at 1-270 is amidoligase domain; that stretch reads MTKFVFVTGG…DGLICDKLRL (270 aa). Ser-13 provides a ligand contact to CTP. Residue Ser-13 coordinates UTP. Residues 14-19 and Asp-71 contribute to the ATP site; that span reads SLGKGI. Mg(2+) contacts are provided by Asp-71 and Glu-144. Residues 151–153, 191–196, and Lys-227 contribute to the CTP site; these read DIE and KTKPTQ. UTP-binding positions include 191-196 and Lys-227; that span reads KTKPTQ. The 254-residue stretch at 295 to 548 folds into the Glutamine amidotransferase type-1 domain; it reads TVAMVGKYVD…IAAAKARHQA (254 aa). Position 357 (Gly-357) interacts with L-glutamine. Cys-384 functions as the Nucleophile; for glutamine hydrolysis in the catalytic mechanism. L-glutamine-binding positions include 385–388, Glu-408, and Arg-474; that span reads LGMQ. Catalysis depends on residues His-521 and Glu-523.

The protein belongs to the CTP synthase family. As to quaternary structure, homotetramer.

It carries out the reaction UTP + L-glutamine + ATP + H2O = CTP + L-glutamate + ADP + phosphate + 2 H(+). The enzyme catalyses L-glutamine + H2O = L-glutamate + NH4(+). It catalyses the reaction UTP + NH4(+) + ATP = CTP + ADP + phosphate + 2 H(+). Its pathway is pyrimidine metabolism; CTP biosynthesis via de novo pathway; CTP from UDP: step 2/2. Allosterically activated by GTP, when glutamine is the substrate; GTP has no effect on the reaction when ammonia is the substrate. The allosteric effector GTP functions by stabilizing the protein conformation that binds the tetrahedral intermediate(s) formed during glutamine hydrolysis. Inhibited by the product CTP, via allosteric rather than competitive inhibition. In terms of biological role, catalyzes the ATP-dependent amination of UTP to CTP with either L-glutamine or ammonia as the source of nitrogen. Regulates intracellular CTP levels through interactions with the four ribonucleotide triphosphates. The sequence is that of CTP synthase from Verminephrobacter eiseniae (strain EF01-2).